We begin with the raw amino-acid sequence, 610 residues long: Lipoprotein LpqB (610 aa).

A signal peptide spans 1–27 (MGAEGGGRRRALRLGAYVGCGAVLLTG). Cysteine 28 carries the N-palmitoyl cysteine lipid modification. The S-diacylglycerol cysteine moiety is linked to residue cysteine 28.

Belongs to the LpqB lipoprotein family.

It localises to the cell membrane. The polypeptide is Lipoprotein LpqB (Streptomyces avermitilis (strain ATCC 31267 / DSM 46492 / JCM 5070 / NBRC 14893 / NCIMB 12804 / NRRL 8165 / MA-4680)).